Here is a 191-residue protein sequence, read N- to C-terminus: uncharacterized protein (191 aa).

One can recognise an HTH tetR-type domain in the interval 3–63 (IDRKKLILEA…EIFTTLLKEM (61 aa)). The segment at residues 26–45 (TMDLVAKLANVGKGTIYTFF) is a DNA-binding region (H-T-H motif).

This is an uncharacterized protein from Bacillus subtilis (strain 168).